Reading from the N-terminus, the 397-residue chain is Elongation factor Tu (397 aa).

The 198-residue stretch at leucine 10 to glutamate 207 folds into the tr-type G domain. The segment at glycine 19–threonine 26 is G1. Glycine 19–threonine 26 lines the GTP pocket. Residue threonine 26 participates in Mg(2+) binding. The interval glycine 60–asparagine 64 is G2. Residues aspartate 81–glycine 84 are G3. GTP is bound by residues aspartate 81–histidine 85 and asparagine 136–aspartate 139. The tract at residues asparagine 136–aspartate 139 is G4. Residues serine 174–arginine 176 form a G5 region.

Belongs to the TRAFAC class translation factor GTPase superfamily. Classic translation factor GTPase family. EF-Tu/EF-1A subfamily. Monomer.

The protein resides in the cytoplasm. It catalyses the reaction GTP + H2O = GDP + phosphate + H(+). GTP hydrolase that promotes the GTP-dependent binding of aminoacyl-tRNA to the A-site of ribosomes during protein biosynthesis. In Pseudomonas fluorescens (strain Pf0-1), this protein is Elongation factor Tu.